The chain runs to 399 residues: CCA-adding enzyme (399 aa).

Residues G32 and R35 each coordinate ATP. The CTP site is built by G32 and R35. Residues D45 and D47 each contribute to the Mg(2+) site. ATP-binding residues include R116, D159, R162, R165, and R168. CTP contacts are provided by R116, D159, R162, R165, and R168.

Belongs to the tRNA nucleotidyltransferase/poly(A) polymerase family. Bacterial CCA-adding enzyme type 3 subfamily. Homodimer. It depends on Mg(2+) as a cofactor.

It catalyses the reaction a tRNA precursor + 2 CTP + ATP = a tRNA with a 3' CCA end + 3 diphosphate. It carries out the reaction a tRNA with a 3' CCA end + 2 CTP + ATP = a tRNA with a 3' CCACCA end + 3 diphosphate. In terms of biological role, catalyzes the addition and repair of the essential 3'-terminal CCA sequence in tRNAs without using a nucleic acid template. Adds these three nucleotides in the order of C, C, and A to the tRNA nucleotide-73, using CTP and ATP as substrates and producing inorganic pyrophosphate. tRNA 3'-terminal CCA addition is required both for tRNA processing and repair. Also involved in tRNA surveillance by mediating tandem CCA addition to generate a CCACCA at the 3' terminus of unstable tRNAs. While stable tRNAs receive only 3'-terminal CCA, unstable tRNAs are marked with CCACCA and rapidly degraded. This Streptococcus sanguinis (strain SK36) protein is CCA-adding enzyme.